Here is a 276-residue protein sequence, read N- to C-terminus: Urease accessory protein UreD (276 aa).

The protein belongs to the UreD family. UreD, UreF and UreG form a complex that acts as a GTP-hydrolysis-dependent molecular chaperone, activating the urease apoprotein by helping to assemble the nickel containing metallocenter of UreC. The UreE protein probably delivers the nickel.

The protein resides in the cytoplasm. Its function is as follows. Required for maturation of urease via the functional incorporation of the urease nickel metallocenter. This Paracidovorax citrulli (strain AAC00-1) (Acidovorax citrulli) protein is Urease accessory protein UreD.